Here is a 378-residue protein sequence, read N- to C-terminus: Galanin receptor 2b (378 aa).

Topologically, residues 1–30 (MSDHEDLNKAMGHWNASESYQLNPASVIVS) are extracellular. A helical transmembrane segment spans residues 31–51 (VVFSLIFLLGTIGNSLVLAVL). At 52 to 62 (LRSGQVGYNTT) the chain is on the cytoplasmic side. Residues 63–83 (NLFILNLSVADFFFIIFCVPF) traverse the membrane as a helical segment. Over 84-101 (QATIYSLEGWVFGSFMCK) the chain is Extracellular. A disulfide bond links C100 and C177. Residues 102–123 (VVHFFINLTMYASSFTLAAVSV) traverse the membrane as a helical segment. Topologically, residues 124-143 (DRYLAIRYPLRSRELRTPCN) are cytoplasmic. Residues 144 to 164 (AVVAMVVIWGLSLVFAGPYLS) traverse the membrane as a helical segment. Topologically, residues 165 to 187 (YYDLIDFENSNVCVPGWEEHNRK) are extracellular. Residues 188-208 (VLDTCTFVFGYVIPVLIVSLS) form a helical membrane-spanning segment. At 209–238 (YTRTIKYLWTAVDPLDGMSESKRAKRKVTK) the chain is on the cytoplasmic side. Residues 239 to 259 (MIIIVTVLFCICWLPYHVVIL) traverse the membrane as a helical segment. The Extracellular portion of the chain corresponds to 260 to 276 (CYLYGDFPFNQTTYAFR). The chain crosses the membrane as a helical span at residues 277-297 (LLSHCMAYANSCLNPIVYALV). Residues 298–378 (SKHFRKGFKK…TITLPFQNQP (81 aa)) are Cytoplasmic-facing. The tract at residues 339 to 362 (EVSQMNEENARQNESEMVNRPLAQ) is disordered.

The protein belongs to the G-protein coupled receptor 1 family. Expressed in neurons in the ventral area of the interpeduncular nucleus (IPN) where expression often overlaps with spx1.

The protein localises to the membrane. Functionally, receptor for the hormone galanin. Receptor for the hormones spexin-1 and spexin-2. The sequence is that of Galanin receptor 2b from Danio rerio (Zebrafish).